The chain runs to 173 residues: Protein-export protein SecB (173 aa).

Belongs to the SecB family. In terms of assembly, homotetramer, a dimer of dimers. One homotetramer interacts with 1 SecA dimer.

It localises to the cytoplasm. One of the proteins required for the normal export of preproteins out of the cell cytoplasm. It is a molecular chaperone that binds to a subset of precursor proteins, maintaining them in a translocation-competent state. It also specifically binds to its receptor SecA. The protein is Protein-export protein SecB of Novosphingobium aromaticivorans (strain ATCC 700278 / DSM 12444 / CCUG 56034 / CIP 105152 / NBRC 16084 / F199).